The primary structure comprises 254 residues: OCIA domain-containing protein 1 (254 aa).

Disordered stretches follow at residues 1-28 (MAPSPAEFSDQQQPAPHRTVQPPGVGYI) and 124-254 (PTQY…VWEE). Residues 1–114 (MAPSPAEFSD…KRLENSPLGE (114 aa)) form the OCIA domain. Positions 124–141 (PTQYPSGTSEFSDVNPKT) are enriched in polar residues. The span at 157-168 (SSVYSSHHNSTS) shows a compositional bias: low complexity. Positions 169 to 186 (DTVPFSTSLGESSPSGIS) are enriched in polar residues. Composition is skewed to basic and acidic residues over residues 199-219 (DTPKRKPMTYDELRSRNRETY) and 234-247 (SLDRAARKDVKTNK).

The protein belongs to the OCIAD1 family.

It localises to the endosome. The polypeptide is OCIA domain-containing protein 1 (ociad1) (Xenopus tropicalis (Western clawed frog)).